The following is a 370-amino-acid chain: Putative glutamate--cysteine ligase 2 (370 aa).

This sequence belongs to the glutamate--cysteine ligase type 2 family. YbdK subfamily.

It carries out the reaction L-cysteine + L-glutamate + ATP = gamma-L-glutamyl-L-cysteine + ADP + phosphate + H(+). Functionally, ATP-dependent carboxylate-amine ligase which exhibits weak glutamate--cysteine ligase activity. This is Putative glutamate--cysteine ligase 2 from Janthinobacterium sp. (strain Marseille) (Minibacterium massiliensis).